The sequence spans 485 residues: Glutamyl-tRNA(Gln) amidotransferase subunit A (485 aa).

Active-site charge relay system residues include Lys79 and Ser154. Ser178 functions as the Acyl-ester intermediate in the catalytic mechanism.

The protein belongs to the amidase family. GatA subfamily. Heterotrimer of A, B and C subunits.

The enzyme catalyses L-glutamyl-tRNA(Gln) + L-glutamine + ATP + H2O = L-glutaminyl-tRNA(Gln) + L-glutamate + ADP + phosphate + H(+). Its function is as follows. Allows the formation of correctly charged Gln-tRNA(Gln) through the transamidation of misacylated Glu-tRNA(Gln) in organisms which lack glutaminyl-tRNA synthetase. The reaction takes place in the presence of glutamine and ATP through an activated gamma-phospho-Glu-tRNA(Gln). This chain is Glutamyl-tRNA(Gln) amidotransferase subunit A, found in Staphylococcus aureus (strain USA300 / TCH1516).